Reading from the N-terminus, the 386-residue chain is Indole-3-acetate O-methyltransferase 1 (386 aa).

An S-adenosyl-L-methionine-binding site is contributed by Tyr-30. Substrate-binding positions include Tyr-30 and 33-37; that span reads NSQAQ. Residues Gly-72, 72–73, Asn-78, 108–111, Asp-110, 152–154, and 169–171 each bind S-adenosyl-L-methionine; these read GC, FSDL, SFY, and AFS. 170-174 provides a ligand contact to substrate; the sequence is FSLHW. 6 residues coordinate Mg(2+): Asn-191, Val-195, Arg-277, Asp-278, Phe-280, and Asn-281. Ser-334 contacts substrate.

It belongs to the methyltransferase superfamily. SABATH family. As to quaternary structure, homodimer. It depends on Mg(2+) as a cofactor. Expressed in seedling roots and leaves. Expressed in the stigma, funiculus, and vascular bundles in sepals, petals and stamens.

It carries out the reaction (indol-3-yl)acetate + S-adenosyl-L-methionine = methyl (indol-3-yl)acetate + S-adenosyl-L-homocysteine. Functionally, catalyzes the methylation of the free carboxyl end of the plant hormone indole-3-acetic acid (IAA). Converts IAA to IAA methyl ester (MeIAA). Regulates IAA activities by IAA methylation. Methylation of IAA plays an important role in regulating plant development and auxin homeostasis. Required for correct leaf pattern formation. MeIAA seems to be an inactive form of IAA. The protein is Indole-3-acetate O-methyltransferase 1 (IAMT1) of Arabidopsis thaliana (Mouse-ear cress).